The following is a 346-amino-acid chain: G-protein coupled receptor 42 (346 aa).

The Extracellular segment spans residues 1-19 (MDTGPDQSYFSGNHWFVFS). The helical transmembrane segment at 20–40 (VYLLTFLVGLPLNLLALVVFV) threads the bilayer. The Cytoplasmic segment spans residues 41-47 (GKLRCRP). Residues 48 to 68 (VAVDVLLLNLTASDLLLLLFL) traverse the membrane as a helical segment. Residues 69-90 (PFRMVEAANGMHWPLPFILCPL) are Extracellular-facing. The chain crosses the membrane as a helical span at residues 91–111 (SGFIFFTTIYLTALFLAAVSI). Topologically, residues 112-132 (ERFLSVAHPLWYKTRPRLGQA) are cytoplasmic. A helical membrane pass occupies residues 133–153 (GLVSVACWLLASAHCSVVYVI). The Extracellular portion of the chain corresponds to 154 to 178 (EFSGDISHSQGTNGTCYLEFRKDQL). Residue N166 is glycosylated (N-linked (GlcNAc...) asparagine). A helical transmembrane segment spans residues 179–199 (AILLPVRLEMAVVLFVVPLII). Topologically, residues 200–222 (TSYCYSRLVWILGRGGSHRRQRR) are cytoplasmic. A helical membrane pass occupies residues 223–243 (VAGLVAATLLNFLVCFGPYNV). Over 244–258 (SHVVGYICGESPVWR) the chain is Extracellular. The helical transmembrane segment at 259–279 (IYVTLLSTLNSCVDPFVYYFS) threads the bilayer. Residues 280 to 346 (SSGFQADFHE…TGGQVACAEN (67 aa)) are Cytoplasmic-facing. The segment covering 307 to 330 (MELKEQKGGEEQRADRPAERKTSE) has biased composition (basic and acidic residues). Positions 307-346 (MELKEQKGGEEQRADRPAERKTSEHSQGCGTGGQVACAEN) are disordered.

It belongs to the G-protein coupled receptor 1 family.

The protein resides in the cell membrane. Functionally, g protein-coupled receptor that is activated by short chain fatty acids (SCFAs), such as propionate. Hence may play a role in the regulation of whole-body energy homeostasis and/or in intestinal immunity. The polypeptide is G-protein coupled receptor 42 (GPR42) (Homo sapiens (Human)).